The sequence spans 397 residues: Subtilisin-like serine protease Pen c 1 (397 aa).

A signal peptide spans 1 to 19 (MGFLKVLATSLATLAVVDA). Positions 20-115 (GTLLTASNTD…IEPDMIVNAT (96 aa)) are cleaved as a propeptide — removed in mature form. In terms of domain architecture, Inhibitor I9 spans 35 to 113 (SYIVVMNDDV…KYIEPDMIVN (79 aa)). The Peptidase S8 domain occupies 125–397 (SWGLARISSK…SKLLYNGINV (273 aa)). Active-site charge relay system residues include Asp157, His188, and Ser343.

It belongs to the peptidase S8 family.

It is found in the secreted. Inhibited by 0.1 mM diisopropyl fluorophosphate (DFP), phenylmethanesulfonyl fluoride (PMSF), chymostatin and elastatinal. Not inhibited by N-alpha-p-tosyl-L-lysine chloromethylketone (TLCK), N-tosyl-L-phenylalanyl chloromethyl ketone (TPCK) or N-carbobenzoxy-L-phenylalanine chloromethylketone (ZPCK). Functionally, serine protease. Hydrolyzes azocasein. Cleaves peptide bonds of the oxidized insulin B chain preferably at 15-Leu-|-Tyr-16, but also at 4-Gln-|-His-5 and 24-Phe-|-Phe-25, and to a lesser extent at 5-His-|-Leu-6 and 25-Phe-|-Tyr-26. Hydrolyzes amide bonds between amino acids and 7-amino-4-methylcoumarin (AMC) in vitro. The chain is Subtilisin-like serine protease Pen c 1 from Penicillium citrinum.